Here is an 864-residue protein sequence, read N- to C-terminus: Leucine--tRNA ligase (864 aa).

The 'HIGH' region signature appears at 42–52; that stretch reads PYPSGKLHMGH. Residues 624-628 carry the 'KMSKS' region motif; it reads KMSKS. ATP is bound at residue Lys627.

This sequence belongs to the class-I aminoacyl-tRNA synthetase family.

It localises to the cytoplasm. The catalysed reaction is tRNA(Leu) + L-leucine + ATP = L-leucyl-tRNA(Leu) + AMP + diphosphate. The sequence is that of Leucine--tRNA ligase from Burkholderia ambifaria (strain MC40-6).